Consider the following 337-residue polypeptide: Glycerol-3-phosphate dehydrogenase [NAD(P)+] (337 aa).

NADPH contacts are provided by Ser-17, Tyr-18, His-38, and Lys-112. Positions 112, 141, and 143 each coordinate sn-glycerol 3-phosphate. Ala-145 serves as a coordination point for NADPH. Residues Lys-197, Asp-250, Ser-260, Arg-261, and Asn-262 each contribute to the sn-glycerol 3-phosphate site. Residue Lys-197 is the Proton acceptor of the active site. Residue Arg-261 coordinates NADPH. Residues Val-285 and Glu-287 each contribute to the NADPH site.

Belongs to the NAD-dependent glycerol-3-phosphate dehydrogenase family.

Its subcellular location is the cytoplasm. It carries out the reaction sn-glycerol 3-phosphate + NAD(+) = dihydroxyacetone phosphate + NADH + H(+). The enzyme catalyses sn-glycerol 3-phosphate + NADP(+) = dihydroxyacetone phosphate + NADPH + H(+). Its pathway is membrane lipid metabolism; glycerophospholipid metabolism. Its function is as follows. Catalyzes the reduction of the glycolytic intermediate dihydroxyacetone phosphate (DHAP) to sn-glycerol 3-phosphate (G3P), the key precursor for phospholipid synthesis. The sequence is that of Glycerol-3-phosphate dehydrogenase [NAD(P)+] from Pasteurella multocida (strain Pm70).